A 269-amino-acid polypeptide reads, in one-letter code: Elongation factor Ts (269 aa).

The tract at residues 76-79 (TDFV) is involved in Mg(2+) ion dislocation from EF-Tu.

This sequence belongs to the EF-Ts family.

It localises to the cytoplasm. In terms of biological role, associates with the EF-Tu.GDP complex and induces the exchange of GDP to GTP. It remains bound to the aminoacyl-tRNA.EF-Tu.GTP complex up to the GTP hydrolysis stage on the ribosome. This Deinococcus geothermalis (strain DSM 11300 / CIP 105573 / AG-3a) protein is Elongation factor Ts.